The chain runs to 158 residues: SsrA-binding protein (158 aa).

The segment covering 133–148 (KAQDKRETSAKRDWNR) has biased composition (basic and acidic residues). Residues 133–158 (KAQDKRETSAKRDWNRQKARLLKQNG) form a disordered region. The span at 149-158 (QKARLLKQNG) shows a compositional bias: basic residues.

The protein belongs to the SmpB family.

Its subcellular location is the cytoplasm. Functionally, required for rescue of stalled ribosomes mediated by trans-translation. Binds to transfer-messenger RNA (tmRNA), required for stable association of tmRNA with ribosomes. tmRNA and SmpB together mimic tRNA shape, replacing the anticodon stem-loop with SmpB. tmRNA is encoded by the ssrA gene; the 2 termini fold to resemble tRNA(Ala) and it encodes a 'tag peptide', a short internal open reading frame. During trans-translation Ala-aminoacylated tmRNA acts like a tRNA, entering the A-site of stalled ribosomes, displacing the stalled mRNA. The ribosome then switches to translate the ORF on the tmRNA; the nascent peptide is terminated with the 'tag peptide' encoded by the tmRNA and targeted for degradation. The ribosome is freed to recommence translation, which seems to be the essential function of trans-translation. In Jannaschia sp. (strain CCS1), this protein is SsrA-binding protein.